The following is a 185-amino-acid chain: NADH-ubiquinone oxidoreductase chain 6 (185 aa).

Transmembrane regions (helical) follow at residues 3 to 23 (SLFM…ISTP), 28 to 48 (SVFW…SLGL), 54 to 74 (IFII…IMLI), 87 to 107 (HFLP…TNSP), and 134 to 154 (ELVL…ILLA).

It belongs to the complex I subunit 6 family.

Its subcellular location is the mitochondrion membrane. It catalyses the reaction a ubiquinone + NADH + 5 H(+)(in) = a ubiquinol + NAD(+) + 4 H(+)(out). In terms of biological role, core subunit of the mitochondrial membrane respiratory chain NADH dehydrogenase (Complex I) that is believed to belong to the minimal assembly required for catalysis. Complex I functions in the transfer of electrons from NADH to the respiratory chain. The immediate electron acceptor for the enzyme is believed to be ubiquinone. In Sarcophyton glaucum (Toadstool umbrella leather coral), this protein is NADH-ubiquinone oxidoreductase chain 6 (ND6).